The chain runs to 156 residues: Ribosome maturation factor RimP (156 aa).

Belongs to the RimP family.

Its subcellular location is the cytoplasm. In terms of biological role, required for maturation of 30S ribosomal subunits. The protein is Ribosome maturation factor RimP of Fusobacterium nucleatum subsp. nucleatum (strain ATCC 25586 / DSM 15643 / BCRC 10681 / CIP 101130 / JCM 8532 / KCTC 2640 / LMG 13131 / VPI 4355).